Reading from the N-terminus, the 82-residue chain is Sec-independent protein translocase protein TatA (82 aa).

Residues 1-21 form a helical membrane-spanning segment; it reads MGGISIWQLLIIAVIVVLLFG.

Belongs to the TatA/E family. The Tat system comprises two distinct complexes: a TatABC complex, containing multiple copies of TatA, TatB and TatC subunits, and a separate TatA complex, containing only TatA subunits. Substrates initially bind to the TatABC complex, which probably triggers association of the separate TatA complex to form the active translocon.

It localises to the cell inner membrane. Functionally, part of the twin-arginine translocation (Tat) system that transports large folded proteins containing a characteristic twin-arginine motif in their signal peptide across membranes. TatA could form the protein-conducting channel of the Tat system. The polypeptide is Sec-independent protein translocase protein TatA (Vibrio cholerae serotype O1 (strain ATCC 39315 / El Tor Inaba N16961)).